Reading from the N-terminus, the 647-residue chain is Macrolide export ATP-binding/permease protein MacB (647 aa).

The 239-residue stretch at 6-244 (LEISGCYRTF…VDTAVTKINN (239 aa)) folds into the ABC transporter domain. 42-49 (GASGSGKS) lines the ATP pocket. The next 4 membrane-spanning stretches (helical) occupy residues 273-293 (FLTM…VALG), 522-542 (LLIS…VMNI), 577-597 (LVCL…GVVF), and 612-632 (SIVA…FLPA).

It belongs to the ABC transporter superfamily. Macrolide exporter (TC 3.A.1.122) family. As to quaternary structure, homodimer. Part of the tripartite efflux system MacAB-TolC, which is composed of an inner membrane transporter, MacB, a periplasmic membrane fusion protein, MacA, and an outer membrane component, TolC. The complex forms a large protein conduit and can translocate molecules across both the inner and outer membranes. Interacts with MacA.

The protein resides in the cell inner membrane. In terms of biological role, part of the tripartite efflux system MacAB-TolC. MacB is a non-canonical ABC transporter that contains transmembrane domains (TMD), which form a pore in the inner membrane, and an ATP-binding domain (NBD), which is responsible for energy generation. Confers resistance against macrolides. The chain is Macrolide export ATP-binding/permease protein MacB from Shewanella sp. (strain W3-18-1).